Reading from the N-terminus, the 273-residue chain is Ribosomal RNA small subunit methyltransferase A (273 aa).

S-adenosyl-L-methionine contacts are provided by Asn-18, Leu-20, Gly-45, Glu-66, Asp-91, and Asn-113.

This sequence belongs to the class I-like SAM-binding methyltransferase superfamily. rRNA adenine N(6)-methyltransferase family. RsmA subfamily.

Its subcellular location is the cytoplasm. It carries out the reaction adenosine(1518)/adenosine(1519) in 16S rRNA + 4 S-adenosyl-L-methionine = N(6)-dimethyladenosine(1518)/N(6)-dimethyladenosine(1519) in 16S rRNA + 4 S-adenosyl-L-homocysteine + 4 H(+). In terms of biological role, specifically dimethylates two adjacent adenosines (A1518 and A1519) in the loop of a conserved hairpin near the 3'-end of 16S rRNA in the 30S particle. May play a critical role in biogenesis of 30S subunits. The polypeptide is Ribosomal RNA small subunit methyltransferase A (Shigella flexneri).